The chain runs to 418 residues: Somatostatin receptor type 3 (418 aa).

The segment at 1 to 21 is disordered; sequence MDMLHPSSVSTTSEPENASSA. Residues 1-43 lie on the Extracellular side of the membrane; that stretch reads MDMLHPSSVSTTSEPENASSAWPPDATLGNVSAGPSPAGLAVS. Positions 7-20 are enriched in polar residues; the sequence is SSVSTTSEPENASS. Residues Asn17 and Asn30 are each glycosylated (N-linked (GlcNAc...) asparagine). Residues 44–69 traverse the membrane as a helical segment; it reads GVLIPLVYLVVCVVGLLGNSLVIYVV. At 70–79 the chain is on the cytoplasmic side; sequence LRHTASPSVT. The chain crosses the membrane as a helical span at residues 80 to 101; the sequence is NVYILNLALADELFMLGLPFLA. The Extracellular portion of the chain corresponds to 102-116; sequence AQNALSYWPFGSLMC. Cys116 and Cys191 form a disulfide bridge. The chain crosses the membrane as a helical span at residues 117–138; that stretch reads RLVMAVDGINQFTSIFCLTVMS. Over 139–161 the chain is Cytoplasmic; the sequence is VDRYLAVVHPTRSARWRTAPVAR. Residues 162–181 traverse the membrane as a helical segment; sequence TVSAAVWVASAVVVLPVVVF. Residues 182–205 are Extracellular-facing; that stretch reads SGVPRGMSTCHMQWPEPAAAWRAG. A helical membrane pass occupies residues 206–231; the sequence is FIIYTAALGFFGPLLVICLCYLLIVV. The Cytoplasmic portion of the chain corresponds to 232–257; that stretch reads KVRSAGRRVWAPSCQRRRRSERRVTR. A helical membrane pass occupies residues 258–279; it reads MVVAVVALFVLCWMPFYVLNIV. The Extracellular segment spans residues 280–293; that stretch reads NVVCPLPEEPAFFG. A helical membrane pass occupies residues 294–316; it reads LYFLVVALPYANSCANPILYGFL. At 317-418 the chain is on the cytoplasmic side; the sequence is SYRFKQGFRR…KSSTMRISYL (102 aa). A phosphoserine mark is found at Ser332 and Ser337. A disordered region spans residues 335–418; sequence VRSQEPTVGP…KSSTMRISYL (84 aa). Residue Thr348 is modified to Phosphothreonine. Residues 348-360 show a composition bias toward acidic residues; it reads TEEEDEEEEDGEE. A compositionally biased stretch (basic and acidic residues) spans 361–371; sequence SREGGKGKEMN. Composition is skewed to polar residues over residues 373–385 and 395–418; these read RVSQITQPGTSGQ and KEQQLLPQEASTGEKSSTMRISYL.

This sequence belongs to the G-protein coupled receptor 1 family. In terms of assembly, homodimer and heterodimer with SSTR2. Heterodimerization with SSTR2 inactivates SSTR3 receptor function. Post-translationally, phosphorylated. Phosphorylation increases upon somatostatin binding. Brain, pituitary and pancreas.

The protein localises to the cell membrane. Functionally, receptor for somatostatin-14 and -28. This receptor is coupled via pertussis toxin sensitive G proteins to inhibition of adenylyl cyclase. The polypeptide is Somatostatin receptor type 3 (SSTR3) (Homo sapiens (Human)).